Consider the following 408-residue polypeptide: Multidrug resistance protein MdtG (408 aa).

The next 11 membrane-spanning stretches (helical) occupy residues 16 to 36, 58 to 78, 92 to 112, 115 to 135, 146 to 166, 173 to 193, 224 to 244, 256 to 276, 290 to 310, 319 to 339, and 378 to 398; these read LIVAWLGCFLTGAAFSLVMPF, IVFSITFLFSAIASPFWGGLA, LGMGIVMVLMGLAQNIWQFLI, ALLGLLGGFVPNANALIATQV, TLSTGGVSGALLGPMAGGLLA, PVFFITASVLILCFFVTLFCI, LFVTTLIIQVATGSIAPILTL, VAFISGMIASVPGVAALLSAP, ILITALIFSVLLLIPMSYVQT, FLLGAADGALLPAVQTLLVYN, and AVFLVTAGVVLFNAVYSWNSL.

Belongs to the major facilitator superfamily. DHA1 family. MdtG (TC 2.A.1.2.20) subfamily.

It localises to the cell inner membrane. In terms of biological role, confers resistance to fosfomycin and deoxycholate. The sequence is that of Multidrug resistance protein MdtG from Escherichia coli O7:K1 (strain IAI39 / ExPEC).